Consider the following 122-residue polypeptide: Large ribosomal subunit protein bL12 (122 aa).

The protein belongs to the bacterial ribosomal protein bL12 family. As to quaternary structure, homodimer. Part of the ribosomal stalk of the 50S ribosomal subunit. Forms a multimeric L10(L12)X complex, where L10 forms an elongated spine to which 2 to 4 L12 dimers bind in a sequential fashion. Binds GTP-bound translation factors.

In terms of biological role, forms part of the ribosomal stalk which helps the ribosome interact with GTP-bound translation factors. Is thus essential for accurate translation. The chain is Large ribosomal subunit protein bL12 from Acinetobacter baumannii (strain AB0057).